Reading from the N-terminus, the 208-residue chain is Putative ADP-ribose pyrophosphatase YjhB (208 aa).

Residues 69–195 enclose the Nudix hydrolase domain; the sequence is TPKADVRGAV…NTPSQLSMLF (127 aa). The Nudix box motif lies at 100 to 121; the sequence is GFCEIGLSPAENVVKEIKEESG. Residues Glu115 and Glu119 each coordinate Mg(2+).

The protein belongs to the Nudix hydrolase family. Requires Mg(2+) as cofactor. Mn(2+) serves as cofactor.

In terms of biological role, probably mediates the hydrolysis of some nucleoside diphosphate derivatives. This chain is Putative ADP-ribose pyrophosphatase YjhB (yjhB), found in Bacillus subtilis (strain 168).